The following is a 560-amino-acid chain: Calcium-binding and coiled-coil domain-containing protein 1-A (560 aa).

2 coiled-coil regions span residues 156-192 and 367-480; these read KATFLQNQLEMAQKERNDLMRARLALEEEVISKEKRI and WWQE…DKML. Residues 480–517 are disordered; that stretch reads LMEDKTDSSPPTLSVDLSDSDDESPGDEGVSQQLGPCS. Over residues 487–496 the composition is skewed to low complexity; sequence SSPPTLSVDL.

This sequence belongs to the CALCOCO family.

Its subcellular location is the cytoplasm. The protein localises to the nucleus. May function as a coactivator for aryl hydrocarbon and nuclear receptors. This chain is Calcium-binding and coiled-coil domain-containing protein 1-A (calcoco1-a), found in Xenopus laevis (African clawed frog).